The sequence spans 159 residues: NADH-quinone oxidoreductase subunit B (159 aa).

[4Fe-4S] cluster is bound by residues Cys37, Cys38, Cys102, and Cys132.

It belongs to the complex I 20 kDa subunit family. In terms of assembly, NDH-1 is composed of 14 different subunits. Subunits NuoB, C, D, E, F, and G constitute the peripheral sector of the complex. Requires [4Fe-4S] cluster as cofactor.

The protein localises to the cell inner membrane. It catalyses the reaction a quinone + NADH + 5 H(+)(in) = a quinol + NAD(+) + 4 H(+)(out). In terms of biological role, NDH-1 shuttles electrons from NADH, via FMN and iron-sulfur (Fe-S) centers, to quinones in the respiratory chain. Couples the redox reaction to proton translocation (for every two electrons transferred, four hydrogen ions are translocated across the cytoplasmic membrane), and thus conserves the redox energy in a proton gradient. This Vesicomyosocius okutanii subsp. Calyptogena okutanii (strain HA) protein is NADH-quinone oxidoreductase subunit B.